We begin with the raw amino-acid sequence, 693 residues long: F-box protein MAX2 (693 aa).

The F-box domain maps to 3 to 50 (STTLSDLPDVILSTISSLVSDSRARNSLSLVSHKFLALERSTRSHLTI). LRR repeat units follow at residues 9–34 (LPDVILSTISSLVSDSRARNSLSLVS), 49–74 (TIRGNARDLSLVPDCFRSISHLDLSF), 75–100 (LSPWGHTLLASLPIDHQNLLALRLKF), 110–135 (VYTRSPSSLELLLPQWPRIRHIKLLR), 141–167 (SQIPTGGDFVPIFEHCGGFLESLDLSN), 168–196 (FYHWTEDLPPVLLRYADVAARLTRLDLLT), 200–225 (TEGYKSSEIVSITKSCPNLKTFRVAC), 232–257 (FEFVGDETLSAVATSSPKLTLLHMVD), 274–299 (DSAVTAGTLIEVFSGLPNLEELVLDV), 302–327 (DVKHSGVALEALNSKCKKLRVLKLGQ), 332–356 (CSATEWRRLDGVALCGGLQSLSIKN), 357–382 (SGDLTDMGLVAIGRGCCKLTTFEIQG), 383–409 (CENVTVDGLRTMVSLRSKTLTDVRISC), and 410–436 (CKNLDTAASLKAIEPICDRIKRLHIDC). The disordered stretch occupies residues 445–465 (EVEGRVETSEADHEEEDDGYE). LRR repeat units lie at residues 480-505 (CSTSDVNGFCSEDRVWEKLEYLSLWI), 508-532 (GEFLTPLPMTGLDDCPNLEEIRIKI), 541-565 (RPAEPEFGLSCLALYPKLSKMQLDC), and 608-637 (DRDVNQRSLSLPGAGLLQECLTLRKLFIHG).

In terms of assembly, part of a SCF (SKP1-cullin-F-box) protein ligase complex. Interacts with SKP1A/ASK1. Interacts with CUL1. Interacts with SMXL6, SMXL7 and SMXL8. Interacts with D14. Forms a complex with D14 and SKP1A/ASK1 in presence of strigolactone. Expressed in the vasculature of growing leaves and roots, rosette axillary bud, flowers, siliques, funiculi and stems.

It localises to the nucleus. It functions in the pathway protein modification; protein ubiquitination. Functionally, component of SCF(ASK-cullin-F-box) E3 ubiquitin ligase complexes, which may mediate the ubiquitination and subsequent proteasomal degradation of target proteins. Promotes the senescence. Is necessary for responses to strigolactones and karrikins. Contributes to the selective repression of axillary shoots and moderates the branching by regulating negatively the auxin transport in primary stems, in an AXR1-independent manner. Required for the progression of leaf senescence mediated by methyl jasmonate. Required at each node to suppress axillary bud growth. The chain is F-box protein MAX2 from Arabidopsis thaliana (Mouse-ear cress).